We begin with the raw amino-acid sequence, 98 residues long: Small ribosomal subunit protein bS20 (98 aa).

Residues 1-15 (MAPKKTTKKGGPKKR) are compositionally biased toward basic residues. The interval 1–21 (MAPKKTTKKGGPKKRPSAEKR) is disordered.

This sequence belongs to the bacterial ribosomal protein bS20 family.

Functionally, binds directly to 16S ribosomal RNA. The protein is Small ribosomal subunit protein bS20 of Chlamydia felis (strain Fe/C-56) (Chlamydophila felis).